The primary structure comprises 3184 residues: WD repeat- and FYVE domain-containing protein 4 (3184 aa).

Over residues 1–18 (MEAEDLSKAEDRNEDPGS) the composition is skewed to basic and acidic residues. Disordered stretches follow at residues 1–39 (MEAE…QSSS), 944–993 (SHTH…QDST), 1837–1869 (VGAE…KAHP), and 2309–2335 (ALSS…NQDE). The span at 981-993 (QAPQPLGESQDST) shows a compositional bias: polar residues. Over residues 2314-2324 (RHKESQDKNDH) the composition is skewed to basic and acidic residues. The 126-residue stretch at 2385–2510 (LDKEKVTQKF…DRSKAFKSFC (126 aa)) folds into the BEACH-type PH domain. The BEACH domain occupies 2527–2821 (SLRRYPGSDR…QLFTKPHPAR (295 aa)). 6 WD repeats span residues 2863 to 2922 (MYLF…YGSD), 2923 to 2972 (KVLM…PRGL), 2973 to 3014 (RLRQ…LDHL), 3015 to 3057 (THVT…GQPL), 3058 to 3141 (ASIT…ELDV), and 3142 to 3184 (SIAL…SADG). Residues 3107–3128 (SVPGRPAGEEPPAQPPSPRGHK) are disordered.

In terms of assembly, interacts with HSP90AB1.

The protein resides in the early endosome. It localises to the endoplasmic reticulum. Plays a critical role in the regulation of cDC1-mediated cross-presentation of viral and tumor antigens in dendritic cells. Mechanistically, acts near the plasma membrane and interacts with endosomal membranes to promote endosomal-to-cytosol antigen trafficking. Also plays a role in B-cell survival through regulation of autophagy. The sequence is that of WD repeat- and FYVE domain-containing protein 4 (WDFY4) from Homo sapiens (Human).